The chain runs to 269 residues: MSAPISQALWDARIPLLITHPLAPTTPFITSIPRFSYLALLLPRLSAFFNTPCSSFHFEDVVLRNLPVGLLVDLYQPSLPWRLIVNDGVSWDISDTFLNAAKEADFIRNGNANQIMKLSKDDTRQLWHAVIDNDLAAFSRINNRLLNAPTALKHVPMRIYLPLAPGGSAGGDVGEPTVDQQQGGGDASAAGAFKIIQSLVQPLGADRRPRLLGQVLRETMPKLFPSSRDPVMANVLLHGVAVPFNAPLADLMREAAYFDGWLSFVVVVL.

Lys-102 is covalently cross-linked (Glycyl lysine isopeptide (Lys-Gly) (interchain with G-Cter in ATG12)).

It belongs to the ATG5 family. Conjugated with ATG12. The ATG5-ATG12 conjugate forms a complex with several units of ATG16. The ATG12-ATG5 conjugate also associates with ATG3. Conjugated to ATG12; which is essential for autophagy. Conjugation with ATG12 involves ATG7 as an E1-like activating enzyme and ATG10 as an E2-like conjugating enzyme.

Its subcellular location is the preautophagosomal structure membrane. Functionally, involved in cytoplasm to vacuole transport (Cvt) and autophagic vesicle formation. Autophagy is essential for maintenance of amino acid levels and protein synthesis under nitrogen starvation. Required for selective autophagic degradation of the nucleus (nucleophagy). Also required for mitophagy, which eliminates defective or superfluous mitochondria in order to fulfill cellular energy requirements and prevent excess ROS production. Conjugation with ATG12, through a ubiquitin-like conjugating system involving ATG7 as an E1-like activating enzyme and ATG10 as an E2-like conjugating enzyme, is essential for its function. The ATG12-ATG5 conjugate acts as an E3-like enzyme which is required for lipidation of ATG8 and ATG8 association to the vesicle membranes. ATG12-ATG5 rearranges the ATG3 catalytic center and enhances its E2 activity. Required for proper vegetative growth, asexual/sexual reproduction, but, unlike several plant and animal pathogenic fungi, where ATG5 is required for infection, in B.bassiana it is dispensable for pathogenesis. In Beauveria bassiana (strain ARSEF 2860) (White muscardine disease fungus), this protein is Autophagy-related protein 5.